The chain runs to 310 residues: MILTLTLNPSVDISYPLTALKLDDVNRVQEVSKTAGGKGLNVTRVLAQVGEPVLASGFIGGELGQFIAKKLDHADIKHAFYNIKGETRNCIAILHEGQQTEILEQGPEIDNQEAAGFIKHFEQLLEKVEAVAISGSLPKGLNQDYYAQIIERCQNKGVPVILDCSGATLQTVLENPYKPTVIKPNISELYQLLNQPLDESLESLKQAVSQPLFEGIEWIIVSLGAQGAFAKHNHTFYRVNIPTISVLNPVGSGDSTVAGITSAILNHENDHDLLKKANTLGMLNAQEAQTGYVNLNNYDDLFNQIEVLEV.

This sequence belongs to the carbohydrate kinase PfkB family. LacC subfamily.

The catalysed reaction is D-tagatofuranose 6-phosphate + ATP = D-tagatofuranose 1,6-bisphosphate + ADP + H(+). The protein operates within carbohydrate metabolism; D-tagatose 6-phosphate degradation; D-glyceraldehyde 3-phosphate and glycerone phosphate from D-tagatose 6-phosphate: step 1/2. This Staphylococcus aureus (strain USA300 / TCH1516) protein is Tagatose-6-phosphate kinase.